A 73-amino-acid polypeptide reads, in one-letter code: Protein F9 homolog (73 aa).

Topologically, residues 1–34 (GHAAANCALARVATALTRRVPASRHGLAEGGTPP) are virion surface. The helical transmembrane segment at 35-55 (WTLLLAVAAVTVLGVVAVSLL) threads the bilayer. Residues 56–73 (RRALRVRYRFARPAALRA) are Intravirion-facing.

The protein belongs to the chordopoxvirinae L1 protein family.

Its subcellular location is the virion membrane. This is Protein F9 homolog from Capra hircus (Goat).